The sequence spans 127 residues: Large ribosomal subunit protein bL17 (127 aa).

Belongs to the bacterial ribosomal protein bL17 family. Part of the 50S ribosomal subunit. Contacts protein L32.

The sequence is that of Large ribosomal subunit protein bL17 from Mannheimia succiniciproducens (strain KCTC 0769BP / MBEL55E).